Consider the following 258-residue polypeptide: Deoxyribose-phosphate aldolase 2 (258 aa).

D102 (proton donor/acceptor) is an active-site residue. Residue K165 is the Schiff-base intermediate with acetaldehyde of the active site. K199 acts as the Proton donor/acceptor in catalysis.

This sequence belongs to the DeoC/FbaB aldolase family. DeoC type 2 subfamily.

The protein localises to the cytoplasm. It carries out the reaction 2-deoxy-D-ribose 5-phosphate = D-glyceraldehyde 3-phosphate + acetaldehyde. Its pathway is carbohydrate degradation; 2-deoxy-D-ribose 1-phosphate degradation; D-glyceraldehyde 3-phosphate and acetaldehyde from 2-deoxy-alpha-D-ribose 1-phosphate: step 2/2. Catalyzes a reversible aldol reaction between acetaldehyde and D-glyceraldehyde 3-phosphate to generate 2-deoxy-D-ribose 5-phosphate. In Vibrio vulnificus (strain YJ016), this protein is Deoxyribose-phosphate aldolase 2 (deoC2).